Here is a 1014-residue protein sequence, read N- to C-terminus: Regulator of telomere elongation helicase 1 homolog (1014 aa).

Residues 7–324 (AGIPVHFPFE…KEMLLELEKA (318 aa)) enclose the Helicase ATP-binding domain. 42 to 49 (SPTGTGKT) contributes to the ATP binding site. [4Fe-4S] cluster contacts are provided by C147, C165, C174, and C210. Residues 253–256 (DEAH) carry the DEAH box motif. At T873 the chain carries Phosphothreonine. Residues 891–917 (TDMVKTEPGTSNSCSYGNTSSSGSDSR) form a disordered region. Low complexity predominate over residues 899-917 (GTSNSCSYGNTSSSGSDSR).

This sequence belongs to the helicase family. RAD3/XPD subfamily.

It is found in the nucleus. It carries out the reaction ATP + H2O = ADP + phosphate + H(+). Functionally, a probable ATP-dependent DNA helicase implicated in DNA repair and the maintenance of genomic stability. Acts as an anti-recombinase to counteract toxic recombination and limit crossover during meiosis. Regulates meiotic recombination and crossover homeostasis by physically dissociating strand invasion events and thereby promotes noncrossover repair by meiotic synthesis dependent strand annealing (SDSA) as well as disassembly of D loop recombination intermediates. This is Regulator of telomere elongation helicase 1 homolog from Drosophila mojavensis (Fruit fly).